A 308-amino-acid polypeptide reads, in one-letter code: Tetraacyldisaccharide 4'-kinase (308 aa).

Position 63–70 (63–70 (SFGGNGKT)) interacts with ATP.

The protein belongs to the LpxK family.

The enzyme catalyses a lipid A disaccharide + ATP = a lipid IVA + ADP + H(+). The protein operates within glycolipid biosynthesis; lipid IV(A) biosynthesis; lipid IV(A) from (3R)-3-hydroxytetradecanoyl-[acyl-carrier-protein] and UDP-N-acetyl-alpha-D-glucosamine: step 6/6. Functionally, transfers the gamma-phosphate of ATP to the 4'-position of a tetraacyldisaccharide 1-phosphate intermediate (termed DS-1-P) to form tetraacyldisaccharide 1,4'-bis-phosphate (lipid IVA). In Campylobacter jejuni subsp. jejuni serotype O:2 (strain ATCC 700819 / NCTC 11168), this protein is Tetraacyldisaccharide 4'-kinase.